A 204-amino-acid chain; its full sequence is Guanylate kinase (204 aa).

Residues 16 to 196 (AKVIIFSAPS…AKAHALKVIK (181 aa)) enclose the Guanylate kinase-like domain. 23 to 30 (APSGSGKS) contributes to the ATP binding site.

It belongs to the guanylate kinase family.

It localises to the cytoplasm. It carries out the reaction GMP + ATP = GDP + ADP. Functionally, essential for recycling GMP and indirectly, cGMP. This chain is Guanylate kinase, found in Bacteroides fragilis (strain ATCC 25285 / DSM 2151 / CCUG 4856 / JCM 11019 / LMG 10263 / NCTC 9343 / Onslow / VPI 2553 / EN-2).